Here is a 194-residue protein sequence, read N- to C-terminus: Crossover junction endodeoxyribonuclease RuvC (194 aa).

Residues D8, E72, and D144 contribute to the active site. D8, E72, and D144 together coordinate Mg(2+).

It belongs to the RuvC family. As to quaternary structure, homodimer which binds Holliday junction (HJ) DNA. The HJ becomes 2-fold symmetrical on binding to RuvC with unstacked arms; it has a different conformation from HJ DNA in complex with RuvA. In the full resolvosome a probable DNA-RuvA(4)-RuvB(12)-RuvC(2) complex forms which resolves the HJ. The cofactor is Mg(2+).

It is found in the cytoplasm. It catalyses the reaction Endonucleolytic cleavage at a junction such as a reciprocal single-stranded crossover between two homologous DNA duplexes (Holliday junction).. The RuvA-RuvB-RuvC complex processes Holliday junction (HJ) DNA during genetic recombination and DNA repair. Endonuclease that resolves HJ intermediates. Cleaves cruciform DNA by making single-stranded nicks across the HJ at symmetrical positions within the homologous arms, yielding a 5'-phosphate and a 3'-hydroxyl group; requires a central core of homology in the junction. The consensus cleavage sequence is 5'-(A/T)TT(C/G)-3'. Cleavage occurs on the 3'-side of the TT dinucleotide at the point of strand exchange. HJ branch migration catalyzed by RuvA-RuvB allows RuvC to scan DNA until it finds its consensus sequence, where it cleaves and resolves the cruciform DNA. The chain is Crossover junction endodeoxyribonuclease RuvC from Psychrobacter sp. (strain PRwf-1).